Here is a 234-residue protein sequence, read N- to C-terminus: Acetylxylan esterase 2 (234 aa).

A signal peptide spans M1–A17. Positions I18–R27 are excised as a propeptide. Intrachain disulfides connect C29/C106 and C73/C79. Residue S117 is part of the active site. 3 disulfides stabilise this stretch: C128–C188, C174–C206, and C198–C205. Residue D202 is part of the active site. N-linked (GlcNAc...) asparagine glycosylation is present at N207. Residue H214 is part of the active site.

Belongs to the cutinase family. Acetylxylan esterase subfamily. As to quaternary structure, monomer.

It is found in the secreted. It carries out the reaction Deacetylation of xylans and xylo-oligosaccharides.. Its pathway is glycan degradation; xylan degradation. Functionally, degrades acetylated xylans by cleaving acetyl side groups from the hetero-xylan backbone. The protein is Acetylxylan esterase 2 (axe-2) of Talaromyces purpureogenus (Soft rot fungus).